Here is a 284-residue protein sequence, read N- to C-terminus: Putative ABC transporter ATP-binding protein tll2439 (284 aa).

An ABC transporter domain is found at 6 to 242; the sequence is LEFHQVGFRY…WPTFAPELGT (237 aa). Residue 40–47 coordinates ATP; sequence GLNGSGKS.

This sequence belongs to the ABC transporter superfamily.

It is found in the cell inner membrane. In terms of biological role, probably part of an ABC transporter complex. Responsible for energy coupling to the transport system. The chain is Putative ABC transporter ATP-binding protein tll2439 from Thermosynechococcus vestitus (strain NIES-2133 / IAM M-273 / BP-1).